We begin with the raw amino-acid sequence, 205 residues long: High frequency lysogenization protein HflD homolog (205 aa).

The protein belongs to the HflD family.

It localises to the cytoplasm. It is found in the cell inner membrane. The polypeptide is High frequency lysogenization protein HflD homolog (Aliivibrio fischeri (strain MJ11) (Vibrio fischeri)).